A 391-amino-acid chain; its full sequence is ATP phosphoribosyltransferase regulatory subunit (391 aa).

The protein belongs to the class-II aminoacyl-tRNA synthetase family. HisZ subfamily. In terms of assembly, heteromultimer composed of HisG and HisZ subunits.

It is found in the cytoplasm. Its pathway is amino-acid biosynthesis; L-histidine biosynthesis; L-histidine from 5-phospho-alpha-D-ribose 1-diphosphate: step 1/9. In terms of biological role, required for the first step of histidine biosynthesis. May allow the feedback regulation of ATP phosphoribosyltransferase activity by histidine. This is ATP phosphoribosyltransferase regulatory subunit from Clostridium kluyveri (strain ATCC 8527 / DSM 555 / NBRC 12016 / NCIMB 10680 / K1).